The primary structure comprises 519 residues: Glutamate--cysteine ligase (519 aa).

The protein belongs to the glutamate--cysteine ligase type 1 family. Type 1 subfamily.

The enzyme catalyses L-cysteine + L-glutamate + ATP = gamma-L-glutamyl-L-cysteine + ADP + phosphate + H(+). The protein operates within sulfur metabolism; glutathione biosynthesis; glutathione from L-cysteine and L-glutamate: step 1/2. In Photorhabdus laumondii subsp. laumondii (strain DSM 15139 / CIP 105565 / TT01) (Photorhabdus luminescens subsp. laumondii), this protein is Glutamate--cysteine ligase.